The chain runs to 320 residues: Olfactory receptor 2C3 (320 aa).

Over 1–26 (MMEIANVSSPEVFVLLGFSTRPSLET) the chain is Extracellular. An N-linked (GlcNAc...) asparagine glycan is attached at Asn-6. Residues 27–50 (VLFIVVLSFYMVSILGNGIIILVS) traverse the membrane as a helical segment. Residues 51–58 (HTDVHLHT) lie on the Cytoplasmic side of the membrane. Residues 59–80 (PMYFFLANLPFLDMSFTTSIVP) traverse the membrane as a helical segment. Residues 81 to 101 (QLLANLWGPQKTISYGGCVVQ) lie on the Extracellular side of the membrane. A disulfide bond links Cys-98 and Cys-190. The helical transmembrane segment at 102–121 (FYISHWLGATECVLLATMSY) threads the bilayer. Residues 122–140 (DRYAAICRPLHYTVIMHPQ) lie on the Cytoplasmic side of the membrane. The chain crosses the membrane as a helical span at residues 141-159 (LCLGLALASWLGGLTTSMV). Topologically, residues 160-196 (GSTLTMLLPLCGNNCIDHFFCEMPLIMQLACVDTSLN) are extracellular. The chain crosses the membrane as a helical span at residues 197–220 (EMEMYLASFVFVVLPLGLILVSYG). At 221–237 (HIARAVLKIRSAEGRRK) the chain is on the cytoplasmic side. A helical membrane pass occupies residues 238–260 (AFNTCSSHVAVVSLFYGSIIFMY). Over 261 to 273 (LQPAKSTSHEQGK) the chain is Extracellular. Residues 274–293 (FIALFYTVVTPALNPLIYTL) traverse the membrane as a helical segment. Topologically, residues 294-320 (RNTEVKSALRHMVLENCCGSAGKLAQI) are cytoplasmic.

This sequence belongs to the G-protein coupled receptor 1 family.

The protein localises to the cell membrane. In terms of biological role, odorant receptor. The sequence is that of Olfactory receptor 2C3 (OR2C3) from Homo sapiens (Human).